A 346-amino-acid chain; its full sequence is MKFGNIFSYQPPGESHKEVMDRFVRLGVASEELNFDTYWLEHHFTEFGLTGNLFVACANLLGRTTKLNVGTMIVLPTAHPARQMEDLLLLDQMSKGRFNFGVVRGYHKDFRVFGVTMEDSRAITEDFHTMIMDGTKTGLHTDGKNIEFPDVNVYPEAYLEKIPTCMTAESATTTWLAERGLPMVLSWIITTSEKKAQMELYNAVRDSGYSEEYIKNVDHSMTLICSVDEDGKKAEDVREFLGNWYDSYVNATNIFSESNQTRGYDYHKGQKDFVLQGHTNTKRRVDYSNDLNPVGTPEKCIEIQRDIDATGITNITLGFEANGSEEEIIASMKRFMQVAPFLKDPK.

Heterodimer of an alpha and a beta chain.

The enzyme catalyses a long-chain fatty aldehyde + FMNH2 + O2 = a long-chain fatty acid + hnu + FMN + H2O + 2 H(+). In terms of biological role, light-emitting reaction in luminous bacteria. The sequence is that of Alkanal monooxygenase alpha chain (luxA) from Photobacterium phosphoreum.